The following is a 107-amino-acid chain: uncharacterized protein (107 aa).

Residues 80-98 (SIDNLKPTSHQNGTTNDTA) are compositionally biased toward polar residues. Positions 80-107 (SIDNLKPTSHQNGTTNDTATMDHLEKNE) are disordered.

This is an uncharacterized protein from Human spumaretrovirus (SFVcpz(hu)).